Here is a 580-residue protein sequence, read N- to C-terminus: FAD-dependent monooxygenase yanF (580 aa).

A disordered region spans residues 1–21; it reads MSSSAECRPIGWGGWGPDPNT. The region spanning 150 to 322 is the FAD-binding PCMH-type domain; sequence CRLNASCIVT…VEYDLTTNTG (173 aa). Histidine 187 bears the Pros-8alpha-FAD histidine mark.

Belongs to the oxygen-dependent FAD-linked oxidoreductase family.

It functions in the pathway secondary metabolite biosynthesis; terpenoid biosynthesis. In terms of biological role, FAD-dependent monooxygenase; part of the gene cluster that mediates the biosynthesis of yanuthone D, a fungal isoprenoid epoxycyclohexenone that acts as an antibiotic against fungi and bacteria. The first step of the pathway is the synthesis of 6-methylsalicylic acid (6-MSA) by the polyketide synthase yanA. 6-MSA is then converted to m-cresol by the decarboxylase yanB. The cytochrome P450 monooxygenase yanC then catalyzes the oxidation of m-cresol to toluquinol. Epoxidation of toluquinol is then performed by the short chain dehydrogenase yanD, with the help of yanE, and a further prenylated by yanG leads to 7-deacetoxyyanuthone A. The next step is the hydroxylation of C-22 of 7-deacetoxyyanuthone A by the cytochrome P450 monooxygenase yanH to yield 22-deacetylyanuthone A. O-Mevalon transferase yanI then attaches mevalon to the hydroxyl group of 22-deacetylyanuthone A to produce yanuthone E. Finally, the FAD-dependent monooxygenase yanF oxidizes the hydroxyl group at C15 of yanuthone E to form yanuthone D. Furthermore, several branching points in the pathway lead to the production of yanuthones F and G from 7-deacetoxyyanuthone A; yanuthones H and I from 22-deacetylyanuthone A; and yanuthone J from yanuthone E. This chain is FAD-dependent monooxygenase yanF, found in Aspergillus niger (strain ATCC 1015 / CBS 113.46 / FGSC A1144 / LSHB Ac4 / NCTC 3858a / NRRL 328 / USDA 3528.7).